A 98-amino-acid chain; its full sequence is Integration host factor subunit alpha (98 aa).

It belongs to the bacterial histone-like protein family. Heterodimer of an alpha and a beta chain.

In terms of biological role, this protein is one of the two subunits of integration host factor, a specific DNA-binding protein that functions in genetic recombination as well as in transcriptional and translational control. The chain is Integration host factor subunit alpha from Idiomarina loihiensis (strain ATCC BAA-735 / DSM 15497 / L2-TR).